Here is a 122-residue protein sequence, read N- to C-terminus: Large ribosomal subunit protein uL14 (122 aa).

This sequence belongs to the universal ribosomal protein uL14 family. Part of the 50S ribosomal subunit. Forms a cluster with proteins L3 and L19. In the 70S ribosome, L14 and L19 interact and together make contacts with the 16S rRNA in bridges B5 and B8.

Binds to 23S rRNA. Forms part of two intersubunit bridges in the 70S ribosome. The chain is Large ribosomal subunit protein uL14 from Chlorobium phaeovibrioides (strain DSM 265 / 1930) (Prosthecochloris vibrioformis (strain DSM 265)).